Consider the following 303-residue polypeptide: Oxygen-dependent coproporphyrinogen-III oxidase (303 aa).

Ser-93 is a substrate binding site. The a divalent metal cation site is built by His-97 and His-107. Residue His-107 is the Proton donor of the active site. 109 to 111 contacts substrate; it reads NVR. Residues His-146 and His-176 each contribute to the a divalent metal cation site. Positions 241–276 are important for dimerization; that stretch reads YVEFNLVYDRGTLFGLQSGGRTESILMSLPPQVRWG. 259–261 serves as a coordination point for substrate; sequence GGR.

It belongs to the aerobic coproporphyrinogen-III oxidase family. As to quaternary structure, homodimer. Requires a divalent metal cation as cofactor.

It localises to the cytoplasm. The catalysed reaction is coproporphyrinogen III + O2 + 2 H(+) = protoporphyrinogen IX + 2 CO2 + 2 H2O. It functions in the pathway porphyrin-containing compound metabolism; protoporphyrin-IX biosynthesis; protoporphyrinogen-IX from coproporphyrinogen-III (O2 route): step 1/1. Its function is as follows. Involved in the heme biosynthesis. Catalyzes the aerobic oxidative decarboxylation of propionate groups of rings A and B of coproporphyrinogen-III to yield the vinyl groups in protoporphyrinogen-IX. This Pseudomonas putida (strain W619) protein is Oxygen-dependent coproporphyrinogen-III oxidase.